A 418-amino-acid chain; its full sequence is Glutamyl-tRNA reductase (418 aa).

Substrate-binding positions include 49–52 (TCNR), serine 108, 113–115 (EPQ), and glutamine 119. The Nucleophile role is filled by cysteine 50. NADP(+) is bound at residue 188 to 193 (GAGETI).

It belongs to the glutamyl-tRNA reductase family. Homodimer.

The enzyme catalyses (S)-4-amino-5-oxopentanoate + tRNA(Glu) + NADP(+) = L-glutamyl-tRNA(Glu) + NADPH + H(+). It participates in porphyrin-containing compound metabolism; protoporphyrin-IX biosynthesis; 5-aminolevulinate from L-glutamyl-tRNA(Glu): step 1/2. Its function is as follows. Catalyzes the NADPH-dependent reduction of glutamyl-tRNA(Glu) to glutamate 1-semialdehyde (GSA). The chain is Glutamyl-tRNA reductase from Aliivibrio fischeri (strain ATCC 700601 / ES114) (Vibrio fischeri).